A 161-amino-acid polypeptide reads, in one-letter code: Allophycocyanin beta chain (161 aa).

Asn-71 is subject to N4-methylasparagine. Cys-81 provides a ligand contact to (2R,3E)-phycocyanobilin.

This sequence belongs to the phycobiliprotein family. As to quaternary structure, heterodimer of an alpha and a beta chain. Contains one covalently linked phycocyanobilin chromophore.

Its subcellular location is the cellular thylakoid membrane. In terms of biological role, light-harvesting photosynthetic bile pigment-protein from the phycobiliprotein complex. Allophycocyanin has a maximum absorption at approximately 650 nanometers. In Arthrospira platensis (Spirulina platensis), this protein is Allophycocyanin beta chain (apcB).